The following is a 194-amino-acid chain: uncharacterized protein (194 aa).

Disordered stretches follow at residues 1–72 (MAAK…PAAE) and 113–194 (VLIP…SLAV). Positions 26–39 (AEGRSSEGRKERTA) are enriched in basic and acidic residues. Positions 146 to 171 (GSSSTSRNQVASLAYRTQNTAASQPR) are enriched in polar residues.

This is an uncharacterized protein from Homo sapiens (Human).